The chain runs to 204 residues: MSSLLNISHCSYHGYSGLTSRGGINTVENHRWVWHNNGVRLSFPRAESSINITMGCTLQRGIAKSLSQENLVELSDENDDLCPVECVTEFKTDDELLSVLEKSKETNSLVVVDFYRTACGSCKYIEQGFSKLCKQSGDQEAPVIFLKHNVVDEYDEQSEVAERLRIKAVPLFHFYKNGVLLESFATRDKERIDAAILKYTSSES.

The N-terminal 27 residues, 1 to 27 (MSSLLNISHCSYHGYSGLTSRGGINTV), are a transit peptide targeting the chloroplast. A Thioredoxin domain is found at 63–201 (AKSLSQENLV…IDAAILKYTS (139 aa)). Residues cysteine 119 and cysteine 122 each act as nucleophile in the active site. A disulfide bridge links cysteine 119 with cysteine 122.

Belongs to the thioredoxin family.

The protein resides in the plastid. Its subcellular location is the chloroplast. Functionally, probable thiol-disulfide oxidoreductase that may participate in various redox reactions. The sequence is that of Thioredoxin-like 4, chloroplastic from Arabidopsis thaliana (Mouse-ear cress).